The primary structure comprises 318 residues: MGNQEYHEPVLADATTSLLVTRPGIYIDGTLGGGGHSLELLRRLDALDGESLLVGIDQDSYALEAAGQKLQDFGDKAILLRGNFSMVRELLAPVKRGPGEGLEVMGLLLDLGVSSFQIDTPVRGFSYLRDGPLDMRMDPDGPLTAADIVNDYEEQALARLFFRYGEEAHGGRIARAVVSARSVAPITTTGGLAEVVRRACPRKDSPIKTLSRIYQALRIEVNDELGVLQQALEDGFAVLSPGGRFAVISYHSLEDRIVKRFFSARCTADWGPKGLPLREPLKPAEAELVTRKSVQAGEAEVSRNPRARSARLRVIQKL.

S-adenosyl-L-methionine contacts are provided by residues Gly-34–His-36, Asp-57, Leu-91, Asp-110, and Gln-117.

This sequence belongs to the methyltransferase superfamily. RsmH family.

It is found in the cytoplasm. The catalysed reaction is cytidine(1402) in 16S rRNA + S-adenosyl-L-methionine = N(4)-methylcytidine(1402) in 16S rRNA + S-adenosyl-L-homocysteine + H(+). Specifically methylates the N4 position of cytidine in position 1402 (C1402) of 16S rRNA. The sequence is that of Ribosomal RNA small subunit methyltransferase H from Chlorobaculum parvum (strain DSM 263 / NCIMB 8327) (Chlorobium vibrioforme subsp. thiosulfatophilum).